The following is a 127-amino-acid chain: Fluoride-specific ion channel FluC (127 aa).

The next 4 membrane-spanning stretches (helical) occupy residues 4-24, 35-55, 71-91, and 101-121; these read LLCA…WLGM, IGTL…LAWF, TGFC…VFLL, and LNVM…FWLF. Na(+) contacts are provided by Gly-75 and Thr-78.

It belongs to the fluoride channel Fluc/FEX (TC 1.A.43) family.

It is found in the cell inner membrane. It carries out the reaction fluoride(in) = fluoride(out). Its activity is regulated as follows. Na(+) is not transported, but it plays an essential structural role and its presence is essential for fluoride channel function. In terms of biological role, fluoride-specific ion channel. Important for reducing fluoride concentration in the cell, thus reducing its toxicity. This chain is Fluoride-specific ion channel FluC, found in Klebsiella pneumoniae (strain 342).